Reading from the N-terminus, the 433-residue chain is Serine hydroxymethyltransferase (433 aa).

Residues Leu-127 and 131–133 contribute to the (6S)-5,6,7,8-tetrahydrofolate site; that span reads GHL. Lys-236 is modified (N6-(pyridoxal phosphate)lysine).

It belongs to the SHMT family. Homodimer. It depends on pyridoxal 5'-phosphate as a cofactor.

Its subcellular location is the cytoplasm. It carries out the reaction (6R)-5,10-methylene-5,6,7,8-tetrahydrofolate + glycine + H2O = (6S)-5,6,7,8-tetrahydrofolate + L-serine. The protein operates within one-carbon metabolism; tetrahydrofolate interconversion. It functions in the pathway amino-acid biosynthesis; glycine biosynthesis; glycine from L-serine: step 1/1. Its function is as follows. Catalyzes the reversible interconversion of serine and glycine with tetrahydrofolate (THF) serving as the one-carbon carrier. This reaction serves as the major source of one-carbon groups required for the biosynthesis of purines, thymidylate, methionine, and other important biomolecules. Also exhibits THF-independent aldolase activity toward beta-hydroxyamino acids, producing glycine and aldehydes, via a retro-aldol mechanism. The polypeptide is Serine hydroxymethyltransferase (Corynebacterium urealyticum (strain ATCC 43042 / DSM 7109)).